The sequence spans 777 residues: MDPHAPQRQRSGQRLRALALAALACALSPAHAAIDAQQLGARYDAAQANLAFRVYSSRATRVEVFLYKNPTGSQEVARLALSKDPATQVWSLSLPTSTIKNTYGITGAVYYGYRAWGPNWPYDAAWTKGSATGFVSDVDNAGNRFNPNKLLLDPYAREISQDPNTATCADGTIYATGAAHRNKDSGLCASKGIALAADATSVGSKPTRALKDEVIYEVHVRGLTRNDDSVPAAERGTYKGAARKAAALAALGVTAVEFLPVQETQNDQNDVDPNSTAGDNYWGYMTLNYFAPDRRYAYDKSAGGPTREWKAMVKAFHDAGIKVYIDVVYNHTGEGGPWSGTDGLSVYNLLSFRGLDNPAYYSLSSDYKYPWDNTGVGGNYNTRHPIAQNLIVDSLAYWRDALGVDGFRFDLASVLGNSCQHGCFNFDKNDSGNALNRIVAELPPRPAAGGAGADLIAEPWAIGGNSYQVGGFPAGWAEWNGLYRDALRKKQNKLGVETVTPGTLATRFAGSNDLYGDDGRKPWHSINFVVAHDGFTLNDLYAYNDKQNNQPWPYGPSDGGEDHNLSWNQGGIVAEQRKAARTGLALLMLSAGVPMITGGDEALRTQFGNNNTYNLDSAANWLYWSRSALEADHETYTKRLIAFRKAHPALRPANFYSASDTNGNVMEQLRWFKPDGAQADSAYFNGADNHALAWRIDGSEFGDSASAIYVAYNGWSGAVDFKLPWPGTGKQWYRVTDTATWNEGPNAVALPGSETLIGGENTVYGMQARSLLLLIAK.

Residues 1–32 form the signal peptide; it reads MDPHAPQRQRSGQRLRALALAALACALSPAHA. Residues Asp-162, Glu-263, Thr-264, Asn-266, and Asp-293 each contribute to the Ca(2+) site. Asp-410 functions as the Nucleophile in the catalytic mechanism. A disulfide bond links Cys-419 and Cys-423. The active-site Proton donor is Glu-458.

Belongs to the glycosyl hydrolase 13 family. In terms of assembly, monomer. Requires Ca(2+) as cofactor.

The enzyme catalyses Hydrolysis of (1-&gt;6)-alpha-D-glucosidic branch linkages in glycogen, amylopectin and their beta-limit dextrins.. Has a high rate of hydrolysis for glycogen. Does not cleave pullulan. The protein is Isoamylase (iam) of Flavobacterium sp.